A 542-amino-acid chain; its full sequence is MAELDQLPDESSSAKALVSLKEGSLSNTWNEKYSSLQKTPVWKGRNAGPAVEMPFRNSKRSRLFSDEDDRQINTKSPKRNQRVAMIPQKFTATMSTPDKKASQKIGFRLRNLLKLPKAHKWCIYEWFYSNIDKPLFEGDNDFCVCLKESFPNLKTRKLTRVEWGKIRRLMGKPRRCSSAFFEEERSALKQKRQKIRLLQQRKVADVSQFKDLPDEIPLPLVIGTKVTARLRGIHDGLFTGQIDAVDTLNATYRVTFDRTGLGTHTIPDYEVLSNEPHETMPISAFGQKQRPSRFFMTPPRLHYTPPLQSPITDGDPLLGQSPWRSKVSGSDTETLGGFPVEFLIQVTKLSKILMIKKEHIKKLREMNTEAEKLKSYSMPIGIEFQRRYATIVLELEQLNKDLNKVLHKVQQYCYELAPDQGLQPADQPTDMRRRCEEEAQEIVRQANSASGQPCVENENLTDLISRLTAILLQIKCLAEGGDLNSFEFKSLTDSLNDIKNTIDASNISCFQNNVEIHVAHIQSGLSQMGNLHAFAANNTNRD.

Alanine 2 is modified (N-acetylalanine). Lysine 21 is covalently cross-linked (Glycyl lysine isopeptide (Lys-Gly) (interchain with G-Cter in SUMO2)). Phosphoserine is present on residues serine 65 and serine 95. Threonine 96 and threonine 304 each carry phosphothreonine. Phosphoserine occurs at positions 309 and 321.

This sequence belongs to the lin-9 family. Component of the DREAM complex (also named LINC complex) at least composed of E2F4, E2F5, LIN9, LIN37, LIN52, LIN54, MYBL1, MYBL2, RBL1, RBL2, RBBP4, TFDP1 and TFDP2. The complex exists in quiescent cells where it represses cell cycle-dependent genes. It dissociates in S phase when LIN9, LIN37, LIN52 and LIN54 form a subcomplex that binds to MYBL2. Interacts with RB1.

It localises to the nucleus. It is found in the nucleoplasm. Its function is as follows. Acts as a tumor suppressor. Inhibits DNA synthesis. Its ability to inhibit oncogenic transformation is mediated through its association with RB1. Plays a role in the expression of genes required for the G1/S transition. The protein is Protein lin-9 homolog (Lin9) of Mus musculus (Mouse).